Here is a 459-residue protein sequence, read N- to C-terminus: ATP synthase subunit beta (459 aa).

148 to 155 contacts ATP; that stretch reads GGAGVGKT.

The protein belongs to the ATPase alpha/beta chains family. In terms of assembly, F-type ATPases have 2 components, CF(1) - the catalytic core - and CF(0) - the membrane proton channel. CF(1) has five subunits: alpha(3), beta(3), gamma(1), delta(1), epsilon(1). CF(0) has three main subunits: a(1), b(2) and c(9-12). The alpha and beta chains form an alternating ring which encloses part of the gamma chain. CF(1) is attached to CF(0) by a central stalk formed by the gamma and epsilon chains, while a peripheral stalk is formed by the delta and b chains.

It is found in the cell inner membrane. It catalyses the reaction ATP + H2O + 4 H(+)(in) = ADP + phosphate + 5 H(+)(out). Functionally, produces ATP from ADP in the presence of a proton gradient across the membrane. The catalytic sites are hosted primarily by the beta subunits. The polypeptide is ATP synthase subunit beta (Thiobacillus denitrificans (strain ATCC 25259 / T1)).